Consider the following 240-residue polypeptide: Methylthioribulose-1-phosphate dehydratase (240 aa).

Cys-99 provides a ligand contact to substrate. 2 residues coordinate Zn(2+): His-116 and His-118. The active-site Proton donor/acceptor is the Glu-145. His-201 contributes to the Zn(2+) binding site.

The protein belongs to the aldolase class II family. MtnB subfamily. Zn(2+) is required as a cofactor.

It localises to the cytoplasm. The catalysed reaction is 5-(methylsulfanyl)-D-ribulose 1-phosphate = 5-methylsulfanyl-2,3-dioxopentyl phosphate + H2O. Its pathway is amino-acid biosynthesis; L-methionine biosynthesis via salvage pathway; L-methionine from S-methyl-5-thio-alpha-D-ribose 1-phosphate: step 2/6. In terms of biological role, catalyzes the dehydration of methylthioribulose-1-phosphate (MTRu-1-P) into 2,3-diketo-5-methylthiopentyl-1-phosphate (DK-MTP-1-P). In Paracoccidioides brasiliensis (strain Pb03), this protein is Methylthioribulose-1-phosphate dehydratase.